Reading from the N-terminus, the 168-residue chain is MKMVKSIAAGLTAAAAIGAAAAGVTSIMAGGPVVYQMQPVVFGAPLPLDPASAPDVPTAAQLTSLLNSLADPNVSFANKGSLVEGGIGGTEARIADHKLKKAAEHGDLPLSFSVTNIQPAAAGSATADVSVSGPKLSSPVTQNVTFVNQGGWMLSRASAMELLQAAGN.

The N-terminal stretch at 1–22 (MKMVKSIAAGLTAAAAIGAAAA) is a signal peptide. Positions 23–48 (GVTSIMAGGPVVYQMQPVVFGAPLPL) are excised as a propeptide.

It belongs to the MTB12 family.

It is found in the secreted. Functionally, may play a role in the development of protective immune responses. The polypeptide is Low molecular weight antigen MTB12 (mtb12) (Mycobacterium bovis (strain ATCC BAA-935 / AF2122/97)).